A 126-amino-acid chain; its full sequence is Small ribosomal subunit protein bS16 (126 aa).

Residues 87–126 form a disordered region; the sequence is ARSNPEKALPGKRALERVAEKKQKAEDAAAAAAAEASAAE. A compositionally biased stretch (basic and acidic residues) spans 99-113; it reads RALERVAEKKQKAED. Positions 114–126 are enriched in low complexity; that stretch reads AAAAAAAEASAAE.

This sequence belongs to the bacterial ribosomal protein bS16 family.

The chain is Small ribosomal subunit protein bS16 from Agrobacterium fabrum (strain C58 / ATCC 33970) (Agrobacterium tumefaciens (strain C58)).